The chain runs to 128 residues: Arsenic resistance transcriptional regulator ArsR1 (128 aa).

The HTH arsR-type domain occupies 11-103; the sequence is MREILTPPIV…AMLKGVVDAN (93 aa). Arsenite contacts are provided by cysteine 43 and cysteine 45. Positions 44–67 form a DNA-binding region, H-T-H motif; the sequence is VCELTHALELSQPKISRHLAQLRE.

In terms of assembly, homodimer.

It localises to the cytoplasm. Functionally, binds arsenite and regulates the expression of arsenic efflux pumps. In vitro, also binds antimony and bismuth, but not arsenate. The protein is Arsenic resistance transcriptional regulator ArsR1 of Pseudomonas putida (strain ATCC 47054 / DSM 6125 / CFBP 8728 / NCIMB 11950 / KT2440).